Reading from the N-terminus, the 340-residue chain is Phosphoribosylformylglycinamidine cyclo-ligase (340 aa).

This sequence belongs to the AIR synthase family.

The protein resides in the cytoplasm. It carries out the reaction 2-formamido-N(1)-(5-O-phospho-beta-D-ribosyl)acetamidine + ATP = 5-amino-1-(5-phospho-beta-D-ribosyl)imidazole + ADP + phosphate + H(+). The protein operates within purine metabolism; IMP biosynthesis via de novo pathway; 5-amino-1-(5-phospho-D-ribosyl)imidazole from N(2)-formyl-N(1)-(5-phospho-D-ribosyl)glycinamide: step 2/2. This chain is Phosphoribosylformylglycinamidine cyclo-ligase, found in Streptococcus pneumoniae (strain P1031).